The sequence spans 337 residues: Heme A synthase (337 aa).

5 helical membrane passes run 6–26, 87–107, 119–139, 154–174, and 192–212; these read ITKW…IGGI, FIHR…VIYF, LPYI…WYMV, LAFH…QLIK, and LIFS…GALV. Histidine 256 provides a ligand contact to heme. The next 3 membrane-spanning stretches (helical) occupy residues 258–278, 285–305, and 308–328; these read LVGY…LKIE, IAYF…ITLL, and VPII…SVII. Heme is bound at residue histidine 316.

The protein belongs to the COX15/CtaA family. Type 2 subfamily. As to quaternary structure, interacts with CtaB. Requires heme b as cofactor.

Its subcellular location is the cell membrane. It carries out the reaction Fe(II)-heme o + 2 A + H2O = Fe(II)-heme a + 2 AH2. The protein operates within porphyrin-containing compound metabolism; heme A biosynthesis; heme A from heme O: step 1/1. In terms of biological role, catalyzes the conversion of heme O to heme A by two successive hydroxylations of the methyl group at C8. The first hydroxylation forms heme I, the second hydroxylation results in an unstable dihydroxymethyl group, which spontaneously dehydrates, resulting in the formyl group of heme A. This chain is Heme A synthase, found in Rickettsia rickettsii (strain Iowa).